The sequence spans 331 residues: Sucrose operon repressor (331 aa).

The HTH lacI-type domain maps to 1–56 (MASLKDVARLAGVSMMTVSRVMHNAESVRPATRDRVLQAIQTLNYVPDLSARKMRA). The segment at residues 4–23 (LKDVARLAGVSMMTVSRVMH) is a DNA-binding region (H-T-H motif).

Its function is as follows. Repressor for the csc operon. Binds D-fructose as an inducer. In Escherichia coli, this protein is Sucrose operon repressor (cscR).